A 155-amino-acid polypeptide reads, in one-letter code: SsrA-binding protein (155 aa).

It belongs to the SmpB family.

The protein resides in the cytoplasm. Required for rescue of stalled ribosomes mediated by trans-translation. Binds to transfer-messenger RNA (tmRNA), required for stable association of tmRNA with ribosomes. tmRNA and SmpB together mimic tRNA shape, replacing the anticodon stem-loop with SmpB. tmRNA is encoded by the ssrA gene; the 2 termini fold to resemble tRNA(Ala) and it encodes a 'tag peptide', a short internal open reading frame. During trans-translation Ala-aminoacylated tmRNA acts like a tRNA, entering the A-site of stalled ribosomes, displacing the stalled mRNA. The ribosome then switches to translate the ORF on the tmRNA; the nascent peptide is terminated with the 'tag peptide' encoded by the tmRNA and targeted for degradation. The ribosome is freed to recommence translation, which seems to be the essential function of trans-translation. The protein is SsrA-binding protein of Bacillus cereus (strain ATCC 10987 / NRS 248).